Reading from the N-terminus, the 516-residue chain is Cytochrome P450 1A1 (516 aa).

A mitochondrial targeting signal region spans residues 25 to 36 (FRPQVPKGLKSP). Residue Ser63 is glycosylated (O-linked (GlcNAc) serine). Residue Phe220 coordinates substrate. Cys453 is a binding site for heme.

Belongs to the cytochrome P450 family. As to quaternary structure, interacts with cytosolic chaperones HSP70 and HSP90; this interaction is required for initial targeting to mitochondria. Interacts (via mitochondrial targeting signal) with TOMM40 (via N-terminus); this interaction is required for translocation across the mitochondrial outer membrane. Heme serves as cofactor. In terms of tissue distribution, constitutively expressed in liver.

It localises to the endoplasmic reticulum membrane. Its subcellular location is the mitochondrion inner membrane. It is found in the microsome membrane. The protein localises to the cytoplasm. It carries out the reaction an organic molecule + reduced [NADPH--hemoprotein reductase] + O2 = an alcohol + oxidized [NADPH--hemoprotein reductase] + H2O + H(+). The catalysed reaction is estrone + reduced [NADPH--hemoprotein reductase] + O2 = 2-hydroxyestrone + oxidized [NADPH--hemoprotein reductase] + H2O + H(+). It catalyses the reaction estrone + reduced [NADPH--hemoprotein reductase] + O2 = 4-hydroxyestrone + oxidized [NADPH--hemoprotein reductase] + H2O + H(+). The enzyme catalyses estrone + reduced [NADPH--hemoprotein reductase] + O2 = 6alpha-hydroxyestrone + oxidized [NADPH--hemoprotein reductase] + H2O + H(+). It carries out the reaction estrone + reduced [NADPH--hemoprotein reductase] + O2 = 15alpha-hydroxyestrone + oxidized [NADPH--hemoprotein reductase] + H2O + H(+). The catalysed reaction is estrone + reduced [NADPH--hemoprotein reductase] + O2 = 16alpha-hydroxyestrone + oxidized [NADPH--hemoprotein reductase] + H2O + H(+). It catalyses the reaction 17beta-estradiol + reduced [NADPH--hemoprotein reductase] + O2 = 2-hydroxy-17beta-estradiol + oxidized [NADPH--hemoprotein reductase] + H2O + H(+). The enzyme catalyses 17beta-estradiol + reduced [NADPH--hemoprotein reductase] + O2 = 4-hydroxy-17beta-estradiol + oxidized [NADPH--hemoprotein reductase] + H2O + H(+). It carries out the reaction 17beta-estradiol + reduced [NADPH--hemoprotein reductase] + O2 = 6alpha-hydroxy-17beta-estradiol + oxidized [NADPH--hemoprotein reductase] + H2O + H(+). The catalysed reaction is 17beta-estradiol + reduced [NADPH--hemoprotein reductase] + O2 = 7alpha-hydroxy-17beta-estradiol + oxidized [NADPH--hemoprotein reductase] + H2O + H(+). It catalyses the reaction 17beta-estradiol + reduced [NADPH--hemoprotein reductase] + O2 = 15alpha-hydroxy-17beta-estradiol + oxidized [NADPH--hemoprotein reductase] + H2O + H(+). The enzyme catalyses (5Z,8Z,11Z)-eicosatrienoate + reduced [NADPH--hemoprotein reductase] + O2 = 19-hydroxy-(5Z,8Z,11Z)-eicosatrienoate + oxidized [NADPH--hemoprotein reductase] + H2O + H(+). It carries out the reaction (5Z,8Z,11Z,14Z)-eicosatetraenoate + reduced [NADPH--hemoprotein reductase] + O2 = 16-hydroxy-(5Z,8Z,11Z,14Z)-eicosatetraenoate + oxidized [NADPH--hemoprotein reductase] + H2O + H(+). The catalysed reaction is (5Z,8Z,11Z,14Z)-eicosatetraenoate + reduced [NADPH--hemoprotein reductase] + O2 = 17-hydroxy-(5Z,8Z,11Z,14Z)-eicosatetraenoate + oxidized [NADPH--hemoprotein reductase] + H2O + H(+). It catalyses the reaction (5Z,8Z,11Z,14Z)-eicosatetraenoate + reduced [NADPH--hemoprotein reductase] + O2 = 18-hydroxy-(5Z,8Z,11Z,14Z)-eicosatetraenoate + oxidized [NADPH--hemoprotein reductase] + H2O + H(+). The enzyme catalyses (5Z,8Z,11Z,14Z)-eicosatetraenoate + reduced [NADPH--hemoprotein reductase] + O2 = 19-hydroxy-(5Z,8Z,11Z,14Z)-eicosatetraenoate + oxidized [NADPH--hemoprotein reductase] + H2O + H(+). It carries out the reaction (5Z,8Z,11Z,14Z,17Z)-eicosapentaenoate + reduced [NADPH--hemoprotein reductase] + O2 = 19-hydroxy-(5Z,8Z,11Z,14Z,17Z)-eicosapentaenoate + oxidized [NADPH--hemoprotein reductase] + H2O + H(+). The catalysed reaction is (5Z,8Z,11Z,14Z)-eicosatetraenoate + reduced [NADPH--hemoprotein reductase] + O2 = (8R,9S)-epoxy-(5Z,11Z,14Z)-eicosatrienoate + oxidized [NADPH--hemoprotein reductase] + H2O + H(+). It catalyses the reaction (5Z,8Z,11Z,14Z)-eicosatetraenoate + reduced [NADPH--hemoprotein reductase] + O2 = (11R,12S)-epoxy-(5Z,8Z,14Z)-eicosatrienoate + oxidized [NADPH--hemoprotein reductase] + H2O + H(+). The enzyme catalyses (5Z,8Z,11Z,14Z)-eicosatetraenoate + reduced [NADPH--hemoprotein reductase] + O2 = (14S,15R)-epoxy-(5Z,8Z,11Z)-eicosatrienoate + oxidized [NADPH--hemoprotein reductase] + H2O + H(+). It carries out the reaction (5Z,8Z,11Z,14Z)-eicosatetraenoate + reduced [NADPH--hemoprotein reductase] + O2 = (14R,15S)-epoxy-(5Z,8Z,11Z)-eicosatrienoate + oxidized [NADPH--hemoprotein reductase] + H2O + H(+). The catalysed reaction is (5Z,8Z,11Z,14Z,17Z)-eicosapentaenoate + reduced [NADPH--hemoprotein reductase] + O2 = (17R,18S)-epoxy-(5Z,8Z,11Z,14Z)-eicosatetraenoate + oxidized [NADPH--hemoprotein reductase] + H2O + H(+). It catalyses the reaction (4Z,7Z,10Z,13Z,16Z,19Z)-docosahexaenoate + reduced [NADPH--hemoprotein reductase] + O2 = (19S,20R)-epoxy-(4Z,7Z,10Z,13Z,16Z)-docosapentaenoate + oxidized [NADPH--hemoprotein reductase] + H2O + H(+). The enzyme catalyses (4Z,7Z,10Z,13Z,16Z,19Z)-docosahexaenoate + reduced [NADPH--hemoprotein reductase] + O2 = (19R,20S)-epoxy-(4Z,7Z,10Z,13Z,16Z)-docosapentaenoate + oxidized [NADPH--hemoprotein reductase] + H2O + H(+). It carries out the reaction all-trans-retinol + reduced [NADPH--hemoprotein reductase] + O2 = all-trans-retinal + oxidized [NADPH--hemoprotein reductase] + 2 H2O + H(+). The catalysed reaction is all-trans-retinal + reduced [NADPH--hemoprotein reductase] + O2 = all-trans-retinoate + oxidized [NADPH--hemoprotein reductase] + H2O + 2 H(+). It catalyses the reaction (13S)-hydroperoxy-(9Z,11E)-octadecadienoate = 13-oxo-(9Z,11E)-octadecadienoate + H2O. The enzyme catalyses (12S)-hydroperoxy-(5Z,8Z,10E,14Z)-eicosatetraenoate = 12-oxo-(5Z,8Z,10E,14Z)-eicosatetraenoate + H2O. It carries out the reaction (15S)-hydroperoxy-(5Z,8Z,11Z,13E)-eicosatetraenoate = 15-oxo-(5Z,8Z,11Z,13E)-eicosatetraenoate + H2O. The catalysed reaction is (5S)-hydroperoxy-(6E,8Z,11Z,14Z)-eicosatetraenoate = 5-oxo-(6E,8Z,11Z,14Z)-eicosatetraenoate + H2O. It functions in the pathway steroid hormone biosynthesis. The protein operates within lipid metabolism; fatty acid metabolism. It participates in cofactor metabolism; retinol metabolism. Its function is as follows. A cytochrome P450 monooxygenase involved in the metabolism of various endogenous substrates, including fatty acids, steroid hormones and vitamins. Mechanistically, uses molecular oxygen inserting one oxygen atom into a substrate, and reducing the second into a water molecule, with two electrons provided by NADPH via cytochrome P450 reductase (CPR; NADPH-ferrihemoprotein reductase). Catalyzes the hydroxylation of carbon-hydrogen bonds. Exhibits high catalytic activity for the formation of hydroxyestrogens from estrone (E1) and 17beta-estradiol (E2), namely 2-hydroxy E1 and E2, as well as D-ring hydroxylated E1 and E2 at the C15alpha and C16alpha positions. Displays different regioselectivities for polyunsaturated fatty acids (PUFA) hydroxylation. Catalyzes the epoxidation of double bonds of certain PUFA. Converts arachidonic acid toward epoxyeicosatrienoic acid (EET) regioisomers, 8,9-, 11,12-, and 14,15-EET, that function as lipid mediators in the vascular system. Displays an absolute stereoselectivity in the epoxidation of eicosapentaenoic acid (EPA) producing the 17(R),18(S) enantiomer. May play an important role in all-trans retinoic acid biosynthesis in extrahepatic tissues. Catalyzes two successive oxidative transformation of all-trans retinol to all-trans retinal and then to the active form all-trans retinoic acid. May also participate in eicosanoids metabolism by converting hydroperoxide species into oxo metabolites (lipoxygenase-like reaction, NADPH-independent). This Cavia porcellus (Guinea pig) protein is Cytochrome P450 1A1 (CYP1A1).